The chain runs to 213 residues: MDSEKILNAVKEARTLAKPRNFTQSVDLIVNLKELDLSRPENRLKEQIVLPSGRGKDVAIAVIAKGDLAAQAEEMGLTVIRQEELEELGKNKKTAKKIANAHGFFIAQADMMPLVGKSLGPVLGPRGKMPQPVPGNANLAPLVARFQKTVSINTRDKALFQVYIGHESMSDDELAANAEAILNVVSRKYEKGLYHVKSAFTKLTMGAAAPIEK.

It belongs to the universal ribosomal protein uL1 family. As to quaternary structure, part of the 50S ribosomal subunit.

Binds directly to 23S rRNA. Probably involved in E site tRNA release. Functionally, protein L1 is also a translational repressor protein, it controls the translation of its operon by binding to its mRNA. This chain is Large ribosomal subunit protein uL1, found in Methanococcus maripaludis (strain C5 / ATCC BAA-1333).